Here is a 42-residue protein sequence, read N- to C-terminus: Photosystem I reaction center subunit IX (42 aa).

A helical transmembrane segment spans residues 7–27; the sequence is YLSVAPVLSTLWFVSLAGLLI.

The protein belongs to the PsaJ family.

It is found in the plastid. The protein resides in the chloroplast thylakoid membrane. May help in the organization of the PsaE and PsaF subunits. The protein is Photosystem I reaction center subunit IX of Capsella bursa-pastoris (Shepherd's purse).